The following is a 229-amino-acid chain: tRNA (guanine-N(7)-)-methyltransferase (229 aa).

Glutamate 59, glutamate 84, aspartate 111, and aspartate 134 together coordinate S-adenosyl-L-methionine. The active site involves aspartate 134. Substrate-binding positions include lysine 138, aspartate 170, and 205–208; that span reads TKFE.

The protein belongs to the class I-like SAM-binding methyltransferase superfamily. TrmB family.

The enzyme catalyses guanosine(46) in tRNA + S-adenosyl-L-methionine = N(7)-methylguanosine(46) in tRNA + S-adenosyl-L-homocysteine. It participates in tRNA modification; N(7)-methylguanine-tRNA biosynthesis. In terms of biological role, catalyzes the formation of N(7)-methylguanine at position 46 (m7G46) in tRNA. The sequence is that of tRNA (guanine-N(7)-)-methyltransferase from Nitrosospira multiformis (strain ATCC 25196 / NCIMB 11849 / C 71).